The primary structure comprises 290 residues: ATP synthase gamma chain (290 aa).

It belongs to the ATPase gamma chain family. As to quaternary structure, F-type ATPases have 2 components, CF(1) - the catalytic core - and CF(0) - the membrane proton channel. CF(1) has five subunits: alpha(3), beta(3), gamma(1), delta(1), epsilon(1). CF(0) has three main subunits: a, b and c.

Its subcellular location is the cell inner membrane. Its function is as follows. Produces ATP from ADP in the presence of a proton gradient across the membrane. The gamma chain is believed to be important in regulating ATPase activity and the flow of protons through the CF(0) complex. In Bacteroides fragilis (strain ATCC 25285 / DSM 2151 / CCUG 4856 / JCM 11019 / LMG 10263 / NCTC 9343 / Onslow / VPI 2553 / EN-2), this protein is ATP synthase gamma chain.